The primary structure comprises 284 residues: Putative ABC transporter ATP-binding protein tll2439 (284 aa).

The ABC transporter domain occupies 6–242 (LEFHQVGFRY…WPTFAPELGT (237 aa)). Residue 40–47 (GLNGSGKS) coordinates ATP.

This sequence belongs to the ABC transporter superfamily.

The protein localises to the cell inner membrane. Probably part of an ABC transporter complex. Responsible for energy coupling to the transport system. This Thermosynechococcus vestitus (strain NIES-2133 / IAM M-273 / BP-1) protein is Putative ABC transporter ATP-binding protein tll2439.